Here is a 387-residue protein sequence, read N- to C-terminus: Alanine racemase (387 aa).

K38 acts as the Proton acceptor; specific for D-alanine in catalysis. K38 is subject to N6-(pyridoxal phosphate)lysine. R136 provides a ligand contact to substrate. Y267 serves as the catalytic Proton acceptor; specific for L-alanine. M316 is a binding site for substrate.

Belongs to the alanine racemase family. It depends on pyridoxal 5'-phosphate as a cofactor.

The enzyme catalyses L-alanine = D-alanine. It participates in amino-acid biosynthesis; D-alanine biosynthesis; D-alanine from L-alanine: step 1/1. Catalyzes the interconversion of L-alanine and D-alanine. May also act on other amino acids. The sequence is that of Alanine racemase (alr) from Clostridium tetani (strain Massachusetts / E88).